The sequence spans 476 residues: Bifunctional protein HldE (476 aa).

Positions 1–318 (MKPILPDYNN…AEAIHGSRDT (318 aa)) are ribokinase. 195-198 (NMSE) contributes to the ATP binding site. Asp-264 is an active-site residue. The interval 344–476 (MTNGCFDILH…IIDAIKGGRG (133 aa)) is cytidylyltransferase.

It in the N-terminal section; belongs to the carbohydrate kinase PfkB family. In the C-terminal section; belongs to the cytidylyltransferase family. In terms of assembly, homodimer.

It catalyses the reaction D-glycero-beta-D-manno-heptose 7-phosphate + ATP = D-glycero-beta-D-manno-heptose 1,7-bisphosphate + ADP + H(+). The catalysed reaction is D-glycero-beta-D-manno-heptose 1-phosphate + ATP + H(+) = ADP-D-glycero-beta-D-manno-heptose + diphosphate. It participates in nucleotide-sugar biosynthesis; ADP-L-glycero-beta-D-manno-heptose biosynthesis; ADP-L-glycero-beta-D-manno-heptose from D-glycero-beta-D-manno-heptose 7-phosphate: step 1/4. The protein operates within nucleotide-sugar biosynthesis; ADP-L-glycero-beta-D-manno-heptose biosynthesis; ADP-L-glycero-beta-D-manno-heptose from D-glycero-beta-D-manno-heptose 7-phosphate: step 3/4. It functions in the pathway bacterial outer membrane biogenesis; LPS core biosynthesis. Its function is as follows. Catalyzes the phosphorylation of D-glycero-D-manno-heptose 7-phosphate at the C-1 position to selectively form D-glycero-beta-D-manno-heptose-1,7-bisphosphate. Functionally, catalyzes the ADP transfer from ATP to D-glycero-beta-D-manno-heptose 1-phosphate, yielding ADP-D-glycero-beta-D-manno-heptose. This chain is Bifunctional protein HldE, found in Vibrio vulnificus (strain YJ016).